The primary structure comprises 872 residues: MKELSSAQIRQMWLDFWKSKGHCVEPSANLVPVNDPTLLWINSGVATLKKYFDGSVIPENPRITNAQKSIRTNDIENVGKTARHHTMFEMLGNFSIGDYFRNEAIGWGFELLTSPEWFDFPKDKLYMTYYPDDKDSYNRWIACGVEPSHLVPIEDNFWEIGAGPSGPDTEIFFDRGEDFDPENIGIRLLAEDIENDRYIEIWNIVLSQFNADPAVPRSEYKELPNKNIDTGAGLERLAAVMQGAKTNFETDLFMPIIREVEKLSGKTYDPDGDNMSFKVIADHIRALLFAIGDGALPGNEGRGYVLRRLLRRAVMHGRRLGINETFLYKLVLTVGQIMESYYPEVLEKRDFIEKIVKREEETFARTIDAGSGHLDSLLAQLKAEGKDTLEGKDIFKLYDTYGFPVELTEELAEDAGYKIDHEGFKSAMKEQQDRARAAVVKGGSMGMQNETLAGIVEESRFEYDTYSLESSLSVIIADNERTEAVSEGQALLVFAQTPFYAEMGGQVADTGRIKNDKGDTVAEVVDVQKAPNGQPLHTVNVLASLSVGTNYTLEINKERRLAVEKNHTATHLLHAALHNVIGEHATQAGSLNEEEFLRFDFTHFEAVSNEELRHIEQEVNEQIWNALTITTTETDVETAKERGAMALFGEKYGKVVRVVQIGNYSVELCGGTHLNNSSEIGLFKIVKEEGIGSGTRRIIAVTGRQAFEAYRNQEDALKEIAATVKAPQLKDAAAKVQALSDSLRDFQKENAELKEKAAAAAAGDVFKDVQEAKGVRFIASQVDVADAGALRTFADNWKQKDYSDVLVLVAAIGEKVNVLVASKTKDVHAGNMIKELAPIVAGRGGGKPDMAMAGGSDASKIAELLAAVAETV.

Residues His567, His571, Cys669, and His673 each coordinate Zn(2+).

The protein belongs to the class-II aminoacyl-tRNA synthetase family. It depends on Zn(2+) as a cofactor.

The protein localises to the cytoplasm. The enzyme catalyses tRNA(Ala) + L-alanine + ATP = L-alanyl-tRNA(Ala) + AMP + diphosphate. Functionally, catalyzes the attachment of alanine to tRNA(Ala) in a two-step reaction: alanine is first activated by ATP to form Ala-AMP and then transferred to the acceptor end of tRNA(Ala). Also edits incorrectly charged Ser-tRNA(Ala) and Gly-tRNA(Ala) via its editing domain. This Streptococcus pyogenes serotype M18 (strain MGAS8232) protein is Alanine--tRNA ligase.